A 67-amino-acid chain; its full sequence is UPF0337 protein msl9551 (67 aa).

The protein belongs to the UPF0337 (CsbD) family.

In Mesorhizobium japonicum (strain LMG 29417 / CECT 9101 / MAFF 303099) (Mesorhizobium loti (strain MAFF 303099)), this protein is UPF0337 protein msl9551.